A 550-amino-acid chain; its full sequence is Chaperonin GroEL (550 aa).

ATP-binding positions include 30-33 (TLGP), lysine 51, 87-91 (DGTTT), glycine 415, and aspartate 495.

It belongs to the chaperonin (HSP60) family. As to quaternary structure, forms a cylinder of 14 subunits composed of two heptameric rings stacked back-to-back. Interacts with the co-chaperonin GroES.

It is found in the cytoplasm. The enzyme catalyses ATP + H2O + a folded polypeptide = ADP + phosphate + an unfolded polypeptide.. Its function is as follows. Together with its co-chaperonin GroES, plays an essential role in assisting protein folding. The GroEL-GroES system forms a nano-cage that allows encapsulation of the non-native substrate proteins and provides a physical environment optimized to promote and accelerate protein folding. The chain is Chaperonin GroEL from Dechloromonas aromatica (strain RCB).